The chain runs to 874 residues: Ectonucleotide pyrophosphatase/phosphodiesterase family member 3 (874 aa).

Over 1-11 (MDSRLALATEE) the chain is Cytoplasmic. The chain crosses the membrane as a helical; Signal-anchor for type II membrane protein span at residues 12–30 (PIKKDSLKKYKILCVVLLA). Over 31-874 (LLVIVSLGLG…TYLPTFETII (844 aa)) the chain is Extracellular. SMB domains are found at residues 51–93 (QGSC…VKST) and 94–138 (QIWT…GESP). Disulfide bonds link Cys-54–Cys-58, Cys-54–Cys-71, Cys-58–Cys-89, Cys-69–Cys-71, Cys-69–Cys-82, Cys-75–Cys-81, Cys-82–Cys-89, Cys-98–Cys-115, Cys-103–Cys-133, Cys-113–Cys-126, Cys-119–Cys-125, Cys-144–Cys-190, and Cys-152–Cys-364. The Cell attachment site motif lies at 78–80 (RGD). Residues 160-544 (PVILFSMDGF…HGSLNHLLKT (385 aa)) are phosphodiesterase. Asp-167 contributes to the Zn(2+) binding site. Lys-204 lines the ATP pocket. A Zn(2+)-binding site is contributed by Thr-205. Thr-205 acts as the Nucleophile in catalysis. Asn-226 contacts ATP. An N-linked (GlcNAc...) asparagine glycan is attached at Asn-236. ATP is bound at residue Asp-275. Residues Asn-279 and Asn-288 are each glycosylated (N-linked (GlcNAc...) asparagine). Tyr-289 contacts ATP. Zn(2+) contacts are provided by Asp-325, His-329, Asp-372, and His-373. Disulfide bonds link Cys-380/Cys-477, Cys-428/Cys-817, Cys-561/Cys-623, Cys-574/Cys-679, Cys-576/Cys-664, and Cys-786/Cys-796. Asn-425 carries N-linked (GlcNAc...) asparagine glycosylation. His-482 provides a ligand contact to Zn(2+). Residues Asn-532, Asn-594, Asn-687, and Asn-701 are each glycosylated (N-linked (GlcNAc...) asparagine). Positions 581-874 (NTPGLEEQAN…TYLPTFETII (294 aa)) are nuclease. Ca(2+)-binding residues include Asp-751, Asn-753, Asp-755, His-757, and Asp-759. An N-linked (GlcNAc...) asparagine glycan is attached at Asn-820.

In terms of assembly, monomer and homodimer. The cofactor is Zn(2+). N-glycosylated. N-glycosylation is necessary for normal transport to the cell membrane, but is not the apical targeting signal. As to expression, detected at the tip of villi in the small intestine. Detected on basophils and mast cells (at protein level). Detected in the epithelial layer of the small intestine; expression is higher in the proximal part and lower in the distal part of the small intestine.

It is found in the cell membrane. The protein resides in the apical cell membrane. Its subcellular location is the secreted. The catalysed reaction is a ribonucleoside 5'-triphosphate + H2O = a ribonucleoside 5'-phosphate + diphosphate + H(+). It catalyses the reaction UDP-N-acetyl-alpha-D-glucosamine + H2O = N-acetyl-alpha-D-glucosamine 1-phosphate + UMP + 2 H(+). The enzyme catalyses ATP + H2O = AMP + diphosphate + H(+). It carries out the reaction CTP + H2O = CMP + diphosphate + H(+). The catalysed reaction is GTP + H2O = GMP + diphosphate + H(+). It catalyses the reaction UTP + H2O = UMP + diphosphate + H(+). The enzyme catalyses Hydrolytically removes 5'-nucleotides successively from the 3'-hydroxy termini of 3'-hydroxy-terminated oligonucleotides.. It carries out the reaction P(1),P(3)-bis(5'-adenosyl) triphosphate + H2O = AMP + ADP + 2 H(+). The catalysed reaction is P(1),P(4)-bis(5'-adenosyl) tetraphosphate + H2O = AMP + ATP + 2 H(+). It catalyses the reaction P(1),P(5)-bis(5'-adenosyl) pentaphosphate + H2O = adenosine 5'-tetraphosphate + AMP + 2 H(+). The enzyme catalyses P(1),P(4)-bis(5'-guanosyl) tetraphosphate + H2O = GMP + GTP + 2 H(+). Hydrolase that metabolizes extracellular nucleotides, including ATP, GTP, UTP and CTP. Limits mast cells and basophils response during inflammation and during the chronic phases of allergic responses by eliminating extracellular ATP, a signaling molecule activating these cells in an autocrine manner. Metabolizes extracellular ATP in the lumen of the small intestine, and thereby prevents ATP-induced apoptosis of intestinal plasmacytoid dendritic cells. Has a broad specificity and can also hydrolyze UDP-GlcNAc into UMP and GlcNAc-1-phosphate and potentially several other intracellular nucleotide sugars, including UDP-GalNAc, CMP-NeuAc, GDP-Fuc, and UDP-GlcA. Thereby, could modulate glycan biosynthesis and protein glycosylation. Can hydrolyze extracellular dinucleoside polyphosphates, including the vasoactive adenosine polyphosphates as well. In addition, displays an alkaline phosphodiesterase activity in vitro. This Mus musculus (Mouse) protein is Ectonucleotide pyrophosphatase/phosphodiesterase family member 3.